Here is a 557-residue protein sequence, read N- to C-terminus: Carotenoid-cleaving dioxygenase, mitochondrial (557 aa).

Fe cation-binding residues include histidine 203, histidine 263, histidine 334, and histidine 551.

This sequence belongs to the carotenoid oxygenase family. It depends on Fe(2+) as a cofactor.

It localises to the mitochondrion. The catalysed reaction is all-trans-beta-carotene + O2 = beta-ionone + all-trans-10'-apo-beta-carotenal. It catalyses the reaction 5-cis-lycopene + O2 = 5-cis-10'-apo-lycopenal + (3E,5E)-6,10-dimethylundeca-3,5,9-trien-2-one. The enzyme catalyses 13-cis-lycopene + O2 = 13-cis-10'-apo-lycopenal + (3E,5E)-6,10-dimethylundeca-3,5,9-trien-2-one. It carries out the reaction lutein + O2 = (3R,6R)-hydroxy-alpha-ionone + (3R)-3-hydroxy-10'-apo-beta-carotenal. The catalysed reaction is lutein + O2 = (3R,6R)-3-hydroxy-10'-apo-alpha-carotenal + (3R)-hydroxy-beta-ionone. It catalyses the reaction all-trans-zeaxanthin + 2 O2 = 4,9-dimethyldodeca-2,4,6,8,10-pentaenedial + 2 (3R)-hydroxy-beta-ionone. The enzyme catalyses all-trans-zeaxanthin + O2 = (3R)-3-hydroxy-10'-apo-beta-carotenal + (3R)-hydroxy-beta-ionone. It carries out the reaction beta-cryptoxanthin + O2 = all-trans-10'-apo-beta-carotenal + (3R)-hydroxy-beta-ionone. The catalysed reaction is all-trans-10'-apo-beta-carotenal + O2 = beta-ionone + 4,9-dimethyldodeca-2,4,6,8,10-pentaenedial. It catalyses the reaction (3R)-3-hydroxy-10'-apo-beta-carotenal + O2 = 4,9-dimethyldodeca-2,4,6,8,10-pentaenedial + (3R)-hydroxy-beta-ionone. The enzyme catalyses (3R,6R)-3-hydroxy-10'-apo-alpha-carotenal + O2 = (3R,6R)-hydroxy-alpha-ionone + 4,9-dimethyldodeca-2,4,6,8,10-pentaenedial. Its function is as follows. Broad specificity mitochondrial dioxygenase that mediates the asymmetric oxidative cleavage of carotenoids. Cleaves carotenes (pure hydrocarbon carotenoids) such as all-trans-beta-carotene and lycopene as well as xanthophylls (oxygenated carotenoids) such as zeaxanthin, lutein and beta-cryptoxanthin at both the 9,10 and the 9',10' carbon-carbon double bond. Through its function in carotenoids metabolism regulates oxidative stress and the production of important signaling molecules. The polypeptide is Carotenoid-cleaving dioxygenase, mitochondrial (Pongo abelii (Sumatran orangutan)).